We begin with the raw amino-acid sequence, 495 residues long: Bile acid-sensitive ion channel (495 aa).

A binds the plasma membrane and stabilizes the channel in the closed state region spans residues 1-30 (MEHTEKSKGPAEKGLLGKIRRYLSKRPLPS). The Cytoplasmic portion of the chain corresponds to 1–61 (MEHTEKSKGP…NIAQNQNKVR (61 aa)). The helical transmembrane segment at 62-82 (KVIWLSVVLGSVSLLVWQIYS) threads the bilayer. The Extracellular segment spans residues 83-459 (RLVNYFMWPT…GLFCGASLIT (377 aa)). 6 disulfide bridges follow: C112-C207, C185-C192, C298-C377, C315-C373, C328-C350, and C330-C342. 2 N-linked (GlcNAc...) asparagine glycosylation sites follow: N147 and N163. Residue N306 is glycosylated (N-linked (GlcNAc...) asparagine). N-linked (GlcNAc...) asparagine glycans are attached at residues N370, N405, and N421. The GAS motif; ion selectivity filter signature appears at 454–456 (GAS). Residues 460–480 (IIEIIEYLFTSFYWVFIFFLL) form a helical membrane-spanning segment. The Cytoplasmic portion of the chain corresponds to 481–495 (KILEMIQRTSPPQTV).

This sequence belongs to the amiloride-sensitive sodium channel (TC 1.A.6) family. ASIC5 subfamily. As to quaternary structure, forms homotrimeric channels. Expressed by cholangiocytes (at protein level). Detected in brain, liver, duodenum, jejunum, ileum and testis.

The protein localises to the apical cell membrane. It localises to the cell membrane. It catalyses the reaction Na(+)(in) = Na(+)(out). It carries out the reaction Li(+)(in) = Li(+)(out). The catalysed reaction is K(+)(in) = K(+)(out). The enzyme catalyses H(+)(in) = H(+)(out). Inhibited by the diuretic drug amiloride. Inhibited by diminazene. Inhibited by extracellular Ca(2+). Forms bile acid-gated sodium channels and may play a role in bile acid-dependent absorption and secretion by epithelial cells of the bile ducts. Displays high selectivity for sodium ions but can also permit the permeation of other cations. The gating could be indirect and the consequence of alterations of the membrane environment of the channel by bile acids. As a sodium channel of type II unipolar brush cells of the vestibulocerebellum, controlling the electrical activity of these cells, could play a role in motor coordination and balance. The sequence is that of Bile acid-sensitive ion channel from Rattus norvegicus (Rat).